Reading from the N-terminus, the 379-residue chain is Phospho-N-acetylmuramoyl-pentapeptide-transferase (379 aa).

Helical transmembrane passes span 27–47 (FRTA…GPAV), 76–96 (TMGG…WADL), 100–120 (FVWI…TDDY), 135–155 (AKMG…VLVQ), 185–205 (PHIW…VLVG), 218–238 (GLAI…TYVS), 255–275 (VGEL…FLWY), 283–303 (FMGD…AVII), 307–327 (LLLP…ILQV), and 356–376 (KIIV…LTTL).

Belongs to the glycosyltransferase 4 family. MraY subfamily. Mg(2+) serves as cofactor.

Its subcellular location is the cell inner membrane. It carries out the reaction UDP-N-acetyl-alpha-D-muramoyl-L-alanyl-gamma-D-glutamyl-meso-2,6-diaminopimeloyl-D-alanyl-D-alanine + di-trans,octa-cis-undecaprenyl phosphate = di-trans,octa-cis-undecaprenyl diphospho-N-acetyl-alpha-D-muramoyl-L-alanyl-D-glutamyl-meso-2,6-diaminopimeloyl-D-alanyl-D-alanine + UMP. It functions in the pathway cell wall biogenesis; peptidoglycan biosynthesis. Functionally, catalyzes the initial step of the lipid cycle reactions in the biosynthesis of the cell wall peptidoglycan: transfers peptidoglycan precursor phospho-MurNAc-pentapeptide from UDP-MurNAc-pentapeptide onto the lipid carrier undecaprenyl phosphate, yielding undecaprenyl-pyrophosphoryl-MurNAc-pentapeptide, known as lipid I. This Koribacter versatilis (strain Ellin345) protein is Phospho-N-acetylmuramoyl-pentapeptide-transferase.